The primary structure comprises 151 residues: Large ribosomal subunit protein uL15 (151 aa).

The tract at residues 1–45 (MNLSSLKPVKGSTKTCKRVGRGQGSGCGGTSTRGHKGQKSRSGYS) is disordered. Gly residues predominate over residues 21–31 (RGQGSGCGGTS).

Belongs to the universal ribosomal protein uL15 family. In terms of assembly, part of the 50S ribosomal subunit.

In terms of biological role, binds to the 23S rRNA. This Azobacteroides pseudotrichonymphae genomovar. CFP2 protein is Large ribosomal subunit protein uL15.